The following is a 70-amino-acid chain: Protein SlyX homolog (70 aa).

This sequence belongs to the SlyX family.

This Shewanella sp. (strain MR-7) protein is Protein SlyX homolog.